The chain runs to 384 residues: Probable circularly permuted 1,3-beta-glucanase PGA52 (384 aa).

A signal peptide spans 1–17 (MLFSSLLVSTLVSVATA). Residues asparagine 118, asparagine 128, asparagine 170, asparagine 210, and asparagine 244 are each glycosylated (N-linked (GlcNAc...) asparagine). An ExDxxE motif motif is present at residues 254 to 259 (EFDIFE). N-linked (GlcNAc...) asparagine glycans are attached at residues asparagine 262 and asparagine 318. Serine 361 carries GPI-anchor amidated serine lipidation. Positions 362–384 (GGVSYQPSFITNLLMTVLTLWVI) are cleaved as a propeptide — removed in mature form.

This sequence belongs to the PGA52 family.

The protein resides in the cell membrane. It catalyses the reaction Hydrolysis of (1-&gt;3)-beta-D-glucosidic linkages in (1-&gt;3)-beta-D-glucans.. Probable circularly permuted 1,3-beta-glucanase involved in cell wall modification through beta-1,3-glucan network alterations such as increased branching or remodeling. The protein is Probable circularly permuted 1,3-beta-glucanase PGA52 (PGA52) of Candida albicans (strain SC5314 / ATCC MYA-2876) (Yeast).